The sequence spans 652 residues: Gametogenetin (652 aa).

Disordered stretches follow at residues 1 to 39 (MGNL…MTSQ), 52 to 237 (PGSA…DSES), 251 to 273 (PSLA…GGGG), 291 to 473 (QGPL…GHKE), and 488 to 576 (LAAD…GAAN). Composition is skewed to basic and acidic residues over residues 18–30 (QPSD…RRTS) and 124–133 (RLLEASHRGQ). The interval 123-486 (RRLLEASHRG…APTAAPALPP (364 aa)) is interaction with GGNBP1. Pro residues-rich tracts occupy residues 138-149 (SLRPLKPPPPPR) and 163-178 (QFPP…PPLP). Polar residues predominate over residues 201-212 (ESQAGPRNQGQT). Low complexity-rich tracts occupy residues 213–230 (AGRA…GEMA), 251–267 (PSLA…AKAS), and 299–312 (ARPL…AQEA). Ser389 is subject to Phosphoserine. Over residues 407–422 (APALLAPPTFIFPAPT) the composition is skewed to low complexity. Composition is skewed to pro residues over residues 428-466 (RPGP…PPLT) and 495-513 (APSP…PVSA). The segment at 491-652 (DQAPAPSPAP…HYDLQATHSN (162 aa)) is interactions with ZNF403/GGNBP2 and OAZ3. Over residues 523 to 532 (TRTRRNKGSR) the composition is skewed to basic residues. Over residues 538-552 (TRKDGLHGDGPRERA) the composition is skewed to basic and acidic residues.

Interacts with FANCL, GGNBP1 and ZNF403/GGNBP2.

Functionally, may be involved in spermatogenesis. The chain is Gametogenetin (GGN) from Homo sapiens (Human).